A 112-amino-acid polypeptide reads, in one-letter code: Large ribosomal subunit protein bL17 (112 aa).

This sequence belongs to the bacterial ribosomal protein bL17 family. In terms of assembly, part of the 50S ribosomal subunit. Contacts protein L32.

The protein is Large ribosomal subunit protein bL17 of Desulfitobacterium hafniense (strain DSM 10664 / DCB-2).